A 128-amino-acid polypeptide reads, in one-letter code: MNITLLSGKIHRATVTQAELNYVGSITIDQDLLEAAGIMEYEKVCVVNINNGIRLETYTIAGEKGSGIICLNGAAARYAQVSDKVIIMAYAQMTKEEAQKHKPNVVFVDDNNRITRKTNYEKHGQIVE.

The active-site Schiff-base intermediate with substrate; via pyruvic acid is serine 25. A Pyruvic acid (Ser) modification is found at serine 25. Threonine 57 contributes to the substrate binding site. Tyrosine 58 acts as the Proton donor in catalysis. 73–75 (GAA) contacts substrate.

The protein belongs to the PanD family. As to quaternary structure, heterooctamer of four alpha and four beta subunits. Requires pyruvate as cofactor. Post-translationally, is synthesized initially as an inactive proenzyme, which is activated by self-cleavage at a specific serine bond to produce a beta-subunit with a hydroxyl group at its C-terminus and an alpha-subunit with a pyruvoyl group at its N-terminus.

The protein resides in the cytoplasm. The enzyme catalyses L-aspartate + H(+) = beta-alanine + CO2. The protein operates within cofactor biosynthesis; (R)-pantothenate biosynthesis; beta-alanine from L-aspartate: step 1/1. In terms of biological role, catalyzes the pyruvoyl-dependent decarboxylation of aspartate to produce beta-alanine. The protein is Aspartate 1-decarboxylase of Ruminiclostridium cellulolyticum (strain ATCC 35319 / DSM 5812 / JCM 6584 / H10) (Clostridium cellulolyticum).